Consider the following 272-residue polypeptide: MIKVKFAVIGNPISHSLSPLMHHANFQSLNLENTYEAINVPVNQFQDIKKIISEKSIDGFNVTIPHKERIIPYLDDINEQAKSVGAVNTVLVKDGKWIGYNTDGIGYVNGLKQIYEGIEDAYILILGAGGASKGIANELYKIVRPTLTVANRTMSRFNNWSLNINKINLSHAESHLDEFDIIINTTPAGMNGNTDSVISLNRLASHTLVSDIVYNPYKTPILIEAEQRGNPIYNGLDMFVHQGAESFKIWTNLEPDIKAMKNIVIQKLKGEL.

Shikimate-binding positions include 16–18 and Thr-63; that span reads SLS. Catalysis depends on Lys-67, which acts as the Proton acceptor. Glu-79 contributes to the NADP(+) binding site. Residues Asn-88 and Asp-103 each contribute to the shikimate site. NADP(+) is bound by residues 127–131, 151–156, and Ile-212; these read GAGGA and NRTMSR. Tyr-214 is a binding site for shikimate. Residue Gly-235 participates in NADP(+) binding.

Belongs to the shikimate dehydrogenase family. Homodimer.

It catalyses the reaction shikimate + NADP(+) = 3-dehydroshikimate + NADPH + H(+). It functions in the pathway metabolic intermediate biosynthesis; chorismate biosynthesis; chorismate from D-erythrose 4-phosphate and phosphoenolpyruvate: step 4/7. Functionally, involved in the biosynthesis of the chorismate, which leads to the biosynthesis of aromatic amino acids. Catalyzes the reversible NADPH linked reduction of 3-dehydroshikimate (DHSA) to yield shikimate (SA). This Staphylococcus epidermidis (strain ATCC 12228 / FDA PCI 1200) protein is Shikimate dehydrogenase (NADP(+)).